Consider the following 337-residue polypeptide: Cobalt-precorrin-5B C(1)-methyltransferase (337 aa).

It belongs to the CbiD family.

The catalysed reaction is Co-precorrin-5B + S-adenosyl-L-methionine = Co-precorrin-6A + S-adenosyl-L-homocysteine. The protein operates within cofactor biosynthesis; adenosylcobalamin biosynthesis; cob(II)yrinate a,c-diamide from sirohydrochlorin (anaerobic route): step 6/10. Catalyzes the methylation of C-1 in cobalt-precorrin-5B to form cobalt-precorrin-6A. The polypeptide is Cobalt-precorrin-5B C(1)-methyltransferase (Methanoculleus marisnigri (strain ATCC 35101 / DSM 1498 / JR1)).